A 37-amino-acid chain; its full sequence is U12-myrmicitoxin-Mri1a (37 aa).

The signal sequence occupies residues 1–23 (MKTIELITIFAMITTLMVTVVAG). The propeptide occupies 24–25 (DP). A Valine amide modification is found at Val-35.

Expressed by the venom gland.

It localises to the secreted. Toxin that induces mild paralysis, and reduces survival and reproduction when injected into aphids (A.pisum). May affect various processes in the aphid, including wound healing and hemolymph coagulation. It does not increase the sensitivity of the aphids to the chemical insecticides imidacloprid, methomyl and Spirotetramat. Has no insecticidal activity when injected into blowfly (L.caesar). Does not display any antibacterial or antifungal activity. The protein is U12-myrmicitoxin-Mri1a of Manica rubida (European giant red ant).